Here is a 296-residue protein sequence, read N- to C-terminus: Pantothenate synthetase (296 aa).

ATP is bound at residue 30-37 (MGNLHEGH). His-37 functions as the Proton donor in the catalytic mechanism. Position 61 (Gln-61) interacts with (R)-pantoate. A beta-alanine-binding site is contributed by Gln-61. An ATP-binding site is contributed by 149-152 (GEKD). Position 155 (Gln-155) interacts with (R)-pantoate. Residues Val-178 and 186 to 189 (MSSR) each bind ATP.

The protein belongs to the pantothenate synthetase family. Homodimer.

Its subcellular location is the cytoplasm. The catalysed reaction is (R)-pantoate + beta-alanine + ATP = (R)-pantothenate + AMP + diphosphate + H(+). It participates in cofactor biosynthesis; (R)-pantothenate biosynthesis; (R)-pantothenate from (R)-pantoate and beta-alanine: step 1/1. Its function is as follows. Catalyzes the condensation of pantoate with beta-alanine in an ATP-dependent reaction via a pantoyl-adenylate intermediate. The chain is Pantothenate synthetase from Vibrio atlanticus (strain LGP32) (Vibrio splendidus (strain Mel32)).